We begin with the raw amino-acid sequence, 201 residues long: U1 small nuclear ribonucleoprotein C (201 aa).

Residues 4-36 (YYCEYCDIYLTHSSPVGRRQHNQGRKHISAKIE) form a Matrin-type zinc finger. Over residues 137 to 154 (IQKPYNNFDNKNNNYNNK) the composition is skewed to low complexity. Positions 137–176 (IQKPYNNFDNKNNNYNNKPITNSSYKNDKQDYRNNNENND) are disordered.

The protein belongs to the U1 small nuclear ribonucleoprotein C family. In terms of assembly, U1 snRNP is composed of the 7 core Sm proteins B/B', D1, D2, D3, E, F and G that assemble in a heptameric protein ring on the Sm site of the small nuclear RNA to form the core snRNP, and at least 3 U1 snRNP-specific proteins U1-70K, U1-A and U1-C. U1-C interacts with U1 snRNA and the 5' splice-site region of the pre-mRNA.

It is found in the nucleus. Its function is as follows. Component of the spliceosomal U1 snRNP, which is essential for recognition of the pre-mRNA 5' splice-site and the subsequent assembly of the spliceosome. U1-C is directly involved in initial 5' splice-site recognition for both constitutive and regulated alternative splicing. The interaction with the 5' splice-site seems to precede base-pairing between the pre-mRNA and the U1 snRNA. Stimulates commitment or early (E) complex formation by stabilizing the base pairing of the 5' end of the U1 snRNA and the 5' splice-site region. The chain is U1 small nuclear ribonucleoprotein C from Plasmodium yoelii yoelii.